A 444-amino-acid chain; its full sequence is Methylenetetrahydrofolate--tRNA-(uracil-5-)-methyltransferase TrmFO (444 aa).

FAD is bound at residue 10-15; sequence GAGLAG.

The protein belongs to the MnmG family. TrmFO subfamily. It depends on FAD as a cofactor.

Its subcellular location is the cytoplasm. It carries out the reaction uridine(54) in tRNA + (6R)-5,10-methylene-5,6,7,8-tetrahydrofolate + NADH + H(+) = 5-methyluridine(54) in tRNA + (6S)-5,6,7,8-tetrahydrofolate + NAD(+). The enzyme catalyses uridine(54) in tRNA + (6R)-5,10-methylene-5,6,7,8-tetrahydrofolate + NADPH + H(+) = 5-methyluridine(54) in tRNA + (6S)-5,6,7,8-tetrahydrofolate + NADP(+). Catalyzes the folate-dependent formation of 5-methyl-uridine at position 54 (M-5-U54) in all tRNAs. This Streptococcus pneumoniae serotype 2 (strain D39 / NCTC 7466) protein is Methylenetetrahydrofolate--tRNA-(uracil-5-)-methyltransferase TrmFO.